Here is a 527-residue protein sequence, read N- to C-terminus: Glucose transporter 1B/1C/1D/1F/2B (527 aa).

The segment at M1–A22 is disordered. At M1 to Q43 the chain is on the cytoplasmic side. A helical transmembrane segment spans residues V44–Y64. The Extracellular segment spans residues L65–S118. The helical transmembrane segment at V119–A139 threads the bilayer. The Cytoplasmic portion of the chain corresponds to G140–S151. Residues F152–Y172 form a helical membrane-spanning segment. Over N173–Y175 the chain is Extracellular. A helical transmembrane segment spans residues Y176 to F196. Residues P197–G213 lie on the Cytoplasmic side of the membrane. A helical membrane pass occupies residues V214–L234. Over D235–R249 the chain is Extracellular. Residues L250 to F270 traverse the membrane as a helical segment. Topologically, residues L271–Q299 are cytoplasmic. A helical transmembrane segment spans residues M300–N320. Residues A321 to S338 lie on the Extracellular side of the membrane. Residues L339–A359 traverse the membrane as a helical segment. The Cytoplasmic portion of the chain corresponds to S360–S372. The helical transmembrane segment at F373 to G393 threads the bilayer. Over K394–T403 the chain is Extracellular. The chain crosses the membrane as a helical span at residues G404–A424. The Cytoplasmic portion of the chain corresponds to Q425–G436. The chain crosses the membrane as a helical span at residues G437–I457. Over T458 to A475 the chain is Extracellular. The chain crosses the membrane as a helical span at residues V476–L496. Residues Y497–N527 lie on the Cytoplasmic side of the membrane. Over residues E506–E515 the composition is skewed to basic and acidic residues. The segment at E506–N527 is disordered.

It belongs to the major facilitator superfamily. Sugar transporter (TC 2.A.1.1) family.

Its subcellular location is the membrane. Functionally, facilitative glucose transporter. The protein is Glucose transporter 1B/1C/1D/1F/2B (THT1B) of Trypanosoma brucei brucei.